The primary structure comprises 503 residues: Cell wall integrity and stress response component 2 (503 aa).

An N-terminal signal peptide occupies residues 1 to 23 (MHLDLIHKSFILVWLIYIRAALA). At 24-325 (DQFTYKACYS…KGLSGGAIAG (302 aa)) the chain is on the extracellular side. One can recognise a WSC domain in the interval 25-118 (QFTYKACYSA…SSAMNVYINN (94 aa)). The interval 124–260 (DSTSSTATST…STPSSTSIGT (137 aa)) is disordered. Residues 326 to 346 (VVVGVVCGTVALLALALFFFV) form a helical membrane-spanning segment. Residues 347 to 503 (WKKRRQSSQH…AKDSNNSSLR (157 aa)) are Cytoplasmic-facing. T402 is modified (phosphothreonine). S455 and S458 each carry phosphoserine. A disordered region spans residues 470–503 (IVNPDNVSSNIGSNVSDGDDDYDDAKDSNNSSLR).

N-glycosylated.

The protein localises to the cell membrane. The protein is Cell wall integrity and stress response component 2 (WSC2) of Saccharomyces cerevisiae (strain ATCC 204508 / S288c) (Baker's yeast).